A 201-amino-acid chain; its full sequence is Imidazoleglycerol-phosphate dehydratase (201 aa).

Belongs to the imidazoleglycerol-phosphate dehydratase family.

It is found in the cytoplasm. The catalysed reaction is D-erythro-1-(imidazol-4-yl)glycerol 3-phosphate = 3-(imidazol-4-yl)-2-oxopropyl phosphate + H2O. The protein operates within amino-acid biosynthesis; L-histidine biosynthesis; L-histidine from 5-phospho-alpha-D-ribose 1-diphosphate: step 6/9. The protein is Imidazoleglycerol-phosphate dehydratase of Synechococcus sp. (strain CC9311).